The primary structure comprises 2155 residues: Polyketide synthase 2 (2155 aa).

An N-terminal acylcarrier protein transacylase domain (SAT) region spans residues 7 to 244 (FIFGDQTGGF…IPIPIWAPYH (238 aa)). One can recognise a Ketosynthase family 3 (KS3) domain in the interval 374-807 (DSKIAIIGMS…GGNSALLLED (434 aa)). Active-site for beta-ketoacyl synthase activity residues include C546, H681, and H723. The segment at 908-1213 (GFVFSGQGAQ…ASLHRKDDGW (306 aa)) is malonyl-CoA:ACP transacylase (MAT) domain. The active-site For acyl/malonyl transferase activity is S998. The interval 1290–1605 (TSSVQRIIRQ…RSLLNKVLPP (316 aa)) is product template (PT) domain. The tract at residues 1294–1428 (QRIIRQTDGP…CLLRFADPTS (135 aa)) is N-terminal hotdog fold. One can recognise a PKS/mFAS DH domain in the interval 1294–1600 (QRIIRQTDGP…FLGMSRSLLN (307 aa)). The active-site Proton acceptor; for dehydratase activity is H1327. The C-terminal hotdog fold stretch occupies residues 1455–1600 (TDSLLSKGIV…FLGMSRSLLN (146 aa)). The Proton donor; for dehydratase activity role is filled by D1514. Residues 1626-1654 (AASAKDTERRPLDIPTRAQRQPSSPQTGT) are disordered. Residues 1643–1654 (AQRQPSSPQTGT) are compositionally biased toward polar residues. One can recognise a Carrier 1 domain in the interval 1649–1726 (SPQTGTMGRI…ELKAFLGADQ (78 aa)). O-(pantetheine 4'-phosphoryl)serine is present on S1686. The segment at 1735 to 1765 (SSIGQHTPQTSDKGSGTLASQKTDGDTGPDT) is disordered. Residues 1736 to 1756 (SIGQHTPQTSDKGSGTLASQK) are compositionally biased toward polar residues. In terms of domain architecture, Carrier 2 spans 1764–1838 (DTTLNRVCAI…ALQKALCGSE (75 aa)). S1798 carries the post-translational modification O-(pantetheine 4'-phosphoryl)serine. Positions 1873-2149 (ASPPHATSIL…MVEMGNLIGD (277 aa)) are thioesterase (TE) domain. Catalysis depends on S1979, which acts as the For thioesterase activity.

In terms of biological role, polyketide synthase; part of the Pks2 gene cluster that mediates the formation of infectious structures (appressoria), enabling these fungi to kill insects faster. The product of the Pks2 gene cluster is different from the one of Pks1 and has still not been identified. The protein is Polyketide synthase 2 of Metarhizium anisopliae (strain ARSEF 549).